Consider the following 217-residue polypeptide: Phosphate-specific transport system accessory protein PhoU homolog 2 (217 aa).

Belongs to the PhoU family. Homodimer.

It localises to the cytoplasm. Functionally, plays a role in the regulation of phosphate uptake. The protein is Phosphate-specific transport system accessory protein PhoU homolog 2 of Methanothermobacter thermautotrophicus (strain ATCC 29096 / DSM 1053 / JCM 10044 / NBRC 100330 / Delta H) (Methanobacterium thermoautotrophicum).